Consider the following 1190-residue polypeptide: Phosphatidylinositol 3,4,5-trisphosphate 5-phosphatase 1 (1190 aa).

The region spanning 8-104 (WNHGNITRSK…GLVTHLQFPV (97 aa)) is the SH2 domain. The span at 111–120 (AIDEPEEDTE) shows a compositional bias: acidic residues. The segment at 111–130 (AIDEPEEDTESVMSPPELPP) is disordered. Residues 126 to 131 (PELPPR) carry the SH3-binding 1 motif. Ser-245 is subject to Phosphoserine. Positions 914-917 (NPNY) match the NPXY motif 1 motif. Tyr-917 is modified (phosphotyrosine). Ser-934 is modified (phosphoserine). Tyr-944 carries the phosphotyrosine modification. Residues 946 to 1190 (QLPKDSSLGP…ESLLGRTAMQ (245 aa)) form a disordered region. Positions 961-971 (PPTPPSQPPLS) are enriched in pro residues. Thr-963 is subject to Phosphothreonine. 2 positions are modified to phosphoserine: Ser-966 and Ser-971. Residues 969-974 (PLSPKK) carry the SH3-binding 2 motif. The segment covering 989-998 (QETRPGDLGK) has biased composition (basic and acidic residues). An interaction with DAB2 region spans residues 1014 to 1028 (MFENPLYGSVSPFPK). The NPXY motif 2 motif lies at 1017 to 1020 (NPLY). Position 1020 is a phosphotyrosine (Tyr-1020). A compositionally biased stretch (basic and acidic residues) spans 1031–1045 (PRKEQESPKMMRKEP). Residues 1038–1049 (PKMMRKEPPPCP) carry the SH3-binding 3 motif. The segment covering 1140-1149 (IPAPRPPLPV) has biased composition (pro residues). Basic and acidic residues predominate over residues 1161 to 1183 (KGRDYRDNTELPHHGKHRQEESL).

It belongs to the inositol 1,4,5-trisphosphate 5-phosphatase family. Interacts with tyrosine phosphorylated forms of SHC1. Interacts with tyrosine phosphorylated form of DOK1. Interacts with tyrosine phosphorylated form of DOK3. Interacts with tyrosine phosphorylated form of SLAMF1/CD150. Interacts with PTPN11/SHP-2 in response to IL-3. Interacts with receptor EPOR. Interacts with receptors MS4A2/FCER1B and FCER1G. Interacts with receptors FCGR2B and FCGR3. Interacts with receptor FCGR2A, leading to regulate gene expression during the phagocytic process. Interacts with GRB2. Interacts with PLCG1. Interacts with tyrosine kinases SRC and TEC. Interacts with c-Met/MET. Interacts with MILR1 (tyrosine-phosphorylated). Can weakly interact (via NPXY motif 2) with DAB2 (via PID domain); the interaction is impaired by tyrosine phosphorylation of the NPXY motif. Interacts (via SH2 domain) with tyrosine phosphorylated KLRC1 (via ITIM). Interacts with MPL/TPOR. Post-translationally, tyrosine phosphorylated by the members of the SRC family after exposure to a diverse array of extracellular stimuli such as cytokines, growth factors, antibodies, chemokines, integrin ligands and hypertonic and oxidative stress. Phosphorylated upon IgG receptor FCGR2B-binding.

The protein localises to the cytoplasm. Its subcellular location is the cell membrane. It localises to the membrane raft. It is found in the cytoskeleton. The catalysed reaction is a 1,2-diacyl-sn-glycero-3-phospho-(1D-myo-inositol-3,4,5-trisphosphate) + H2O = a 1,2-diacyl-sn-glycero-3-phospho-(1D-myo-inositol-3,4-bisphosphate) + phosphate. It catalyses the reaction 1D-myo-inositol 1,3,4,5-tetrakisphosphate + H2O = 1D-myo-inositol 1,3,4-trisphosphate + phosphate. The enzyme catalyses a 1,2-diacyl-sn-glycero-3-phospho-(1D-myo-inositol-4,5-bisphosphate) + H2O = a 1,2-diacyl-sn-glycero-3-phospho-(1D-myo-inositol 4-phosphate) + phosphate. Activated upon translocation to the sites of synthesis of PtdIns(3,4,5)P3 in the membrane. Its function is as follows. Phosphatidylinositol (PtdIns) phosphatase that specifically hydrolyzes the 5-phosphate of phosphatidylinositol-3,4,5-trisphosphate (PtdIns(3,4,5)P3) to produce PtdIns(3,4)P2, thereby negatively regulating the PI3K (phosphoinositide 3-kinase) pathways. Also able to hydrolyze the 5-phosphate of phosphatidylinositol-4,5-bisphosphate (PtdIns(4,5)P3) and inositol 1,3,4,5-tetrakisphosphate. Acts as a negative regulator of B-cell antigen receptor signaling. Mediates signaling from the FC-gamma-RIIB receptor (FCGR2B), playing a central role in terminating signal transduction from activating immune/hematopoietic cell receptor systems. Acts as a negative regulator of myeloid cell proliferation/survival and chemotaxis, mast cell degranulation, immune cells homeostasis, integrin alpha-IIb/beta-3 signaling in platelets and JNK signaling in B-cells. Regulates proliferation of osteoclast precursors, macrophage programming, phagocytosis and activation and is required for endotoxin tolerance. Involved in the control of cell-cell junctions, CD32a signaling in neutrophils and modulation of EGF-induced phospholipase C activity. Key regulator of neutrophil migration, by governing the formation of the leading edge and polarization required for chemotaxis. Modulates FCGR3/CD16-mediated cytotoxicity in NK cells. Mediates the activin/TGF-beta-induced apoptosis through its Smad-dependent expression. This is Phosphatidylinositol 3,4,5-trisphosphate 5-phosphatase 1 (Inpp5d) from Rattus norvegicus (Rat).